Here is a 247-residue protein sequence, read N- to C-terminus: Probable transcriptional regulatory protein Tola_2714 (247 aa).

A disordered region spans residues 1-21; it reads MAGHSKWANIKHRKAAQDAKR.

Belongs to the TACO1 family.

It localises to the cytoplasm. The chain is Probable transcriptional regulatory protein Tola_2714 from Tolumonas auensis (strain DSM 9187 / NBRC 110442 / TA 4).